The following is a 325-amino-acid chain: Lipid droplet-associated hydrolase (325 aa).

The Nucleophile role is filled by serine 139. Catalysis depends on charge relay system residues aspartate 271 and histidine 300.

It belongs to the AB hydrolase superfamily. LDAH family.

The protein localises to the lipid droplet. It is found in the endoplasmic reticulum. It catalyses the reaction a cholesterol ester + H2O = cholesterol + a fatty acid + H(+). Functionally, probable serine lipid hydrolase associated with lipid droplets. Has low cholesterol esterase activity. Appears to lack triglyceride lipase activity. Involved in cholesterol and triglyceride homeostasis; stimulates cellular triglyceride accumulation and cellular cholesterol release. Acts antagonistically with PNPLA2/ATGL in regulation of cellular lipid stores. May regulate triglyceride accumulation indirectly through stimulation of PNPLA2/ATGL ubiquitination and proteasomal degradation. Promotes microtubule-dependent lipid droplet fusion. Highly expressed in macrophage-rich areas in atherosclerotic lesions, suggesting that it could promote cholesterol ester turnover in macrophages. This is Lipid droplet-associated hydrolase from Pongo abelii (Sumatran orangutan).